The chain runs to 29 residues: Cyclotide mela-2 (29 aa).

The cyclopeptide (Gly-Asp) cross-link spans 1–29 (GKPTCGETCFKGKCYTPGCTCSYPLCKKD). 3 cysteine pairs are disulfide-bonded: Cys5/Cys19, Cys9/Cys21, and Cys14/Cys26.

This is a cyclic peptide. In terms of processing, contains 3 disulfide bonds.

Functionally, probably participates in a plant defense mechanism (Potential). Binds to and induces leakage in phospholipd membranes, particularly ones containing 1-palmitoyl-2-oleophosphatidylethanolamine (POPE). In vitro, displays cytotoxicity against cultured cells but no hemolytic activity towards fresh erythrocytes. Not active against Gram-negative bacterium E.coli ATCC 25922 or Gram-positive bacterium S.aureus ATCC 25923 up to a concentration of 64 uM. In Melicytus latifolius (Norfolk Island mahoe), this protein is Cyclotide mela-2.